Reading from the N-terminus, the 2230-residue chain is Golgin subfamily A member 4 (2230 aa).

Positions 1–64 are disordered; that stretch reads MFKKLKQKIS…SGDTQSFAQK (64 aa). Ser-10 bears the Phosphoserine mark. Low complexity predominate over residues 12–41; sequence EQQQLQQALAPAQASSNSSTPTRMRSRTSS. A Phosphothreonine modification is found at Thr-39. Residues Ser-41, Ser-71, Ser-78, and Ser-89 each carry the phosphoserine modification. The span at 87-107 shows a compositional bias: basic and acidic residues; it reads SSSKESLVRTSSRESLNRLDL. The tract at residues 87–127 is disordered; the sequence is SSSKESLVRTSSRESLNRLDLDSSTASFDPPSDMDSEAEDL. The interaction with MACF1 stretch occupies residues 133-203; sequence SLNKEQLIQR…EELQMDQQAK (71 aa). Residues 133–2185 are a coiled coil; it reads SLNKEQLIQR…EYLRKVLFEY (2053 aa). Ser-266 bears the Phosphoserine mark. N-linked (GlcNAc...) asparagine glycosylation is found at Asn-585 and Asn-1612. The GRIP domain occupies 2168 to 2215; sequence LFGEPTEFEYLRKVLFEYMMGRETKTMAKVITTVLKFPDDQTQKILER. Thr-2223 bears the Phosphothreonine mark.

Homodimer. Interacts with RAB6A. Interacts with GTP-bound ARL1 and ARL3. Interacts with MACF1. Directly interacts with TBC1D23. Interacts with FAM91A1; this interaction may be mediated by TBC1D23.

The protein resides in the cytoplasm. Its subcellular location is the golgi apparatus membrane. It is found in the golgi apparatus. The protein localises to the trans-Golgi network membrane. Involved in vesicular trafficking at the Golgi apparatus level. May play a role in delivery of transport vesicles containing GPI-linked proteins from the trans-Golgi network through its interaction with MACF1. Involved in endosome-to-Golgi trafficking. This Homo sapiens (Human) protein is Golgin subfamily A member 4 (GOLGA4).